The chain runs to 77 residues: Secapin (77 aa).

A signal peptide spans M1–A32. A propeptide spanning residues V33–R52 is cleaved from the precursor. C61 and C72 are joined by a disulfide.

It belongs to the secapin family. As to expression, expressed by the venom gland.

It localises to the secreted. Its function is as follows. Nontoxic peptide. The protein is Secapin of Vespa velutina nigrithorax (Hornet).